We begin with the raw amino-acid sequence, 188 residues long: Putative protein SSX9 (188 aa).

The region spanning 20 to 83 is the KRAB-related domain; sequence KIQKAFDDIA…TGATDLQGND (64 aa). The disordered stretch occupies residues 114 to 165; the sequence is KKPAEVGNDSKEVPEASGLQNDGKQLCPPGKPTTSEKINKASGPKRGKHAWT. Residues 115-127 are compositionally biased toward basic and acidic residues; it reads KPAEVGNDSKEVP. Residue S123 is modified to Phosphoserine. The span at 156–165 shows a compositional bias: basic residues; that stretch reads GPKRGKHAWT.

It belongs to the SSX family. Not detected in any normal or tumor tissues.

Functionally, could act as a modulator of transcription. The chain is Putative protein SSX9 from Homo sapiens (Human).